Consider the following 757-residue polypeptide: Xaa-Pro dipeptidyl-peptidase (757 aa).

Catalysis depends on charge relay system residues Ser348, Asp468, and His498.

Belongs to the peptidase S15 family. In terms of assembly, homodimer.

Its subcellular location is the cytoplasm. It carries out the reaction Hydrolyzes Xaa-Pro-|- bonds to release unblocked, N-terminal dipeptides from substrates including Ala-Pro-|-p-nitroanilide and (sequentially) Tyr-Pro-|-Phe-Pro-|-Gly-Pro-|-Ile.. Its function is as follows. Removes N-terminal dipeptides sequentially from polypeptides having unsubstituted N-termini provided that the penultimate residue is proline. This is Xaa-Pro dipeptidyl-peptidase from Streptococcus pneumoniae serotype 19F (strain G54).